Here is a 595-residue protein sequence, read N- to C-terminus: Aspartate--tRNA(Asp/Asn) ligase (595 aa).

Glu174 contributes to the L-aspartate binding site. An aspartate region spans residues 198 to 201 (QLFK). Arg220 contributes to the L-aspartate binding site. Residues 220–222 (RDE) and Gln229 each bind ATP. His452 provides a ligand contact to L-aspartate. Position 486 (Glu486) interacts with ATP. Arg493 contributes to the L-aspartate binding site. 538-541 (GLDR) provides a ligand contact to ATP.

The protein belongs to the class-II aminoacyl-tRNA synthetase family. Type 1 subfamily. In terms of assembly, homodimer.

The protein localises to the cytoplasm. It carries out the reaction tRNA(Asx) + L-aspartate + ATP = L-aspartyl-tRNA(Asx) + AMP + diphosphate. In terms of biological role, aspartyl-tRNA synthetase with relaxed tRNA specificity since it is able to aspartylate not only its cognate tRNA(Asp) but also tRNA(Asn). Reaction proceeds in two steps: L-aspartate is first activated by ATP to form Asp-AMP and then transferred to the acceptor end of tRNA(Asp/Asn). This chain is Aspartate--tRNA(Asp/Asn) ligase, found in Nitrosococcus oceani (strain ATCC 19707 / BCRC 17464 / JCM 30415 / NCIMB 11848 / C-107).